The sequence spans 92 residues: uncharacterized protein (92 aa).

Positions 1-92 (MSDAAAPAQA…PSPSQQQVAA (92 aa)) are disordered.

This is an uncharacterized protein from Caenorhabditis elegans.